A 98-amino-acid polypeptide reads, in one-letter code: (4S)-4-hydroxy-5-phosphonooxypentane-2,3-dione isomerase (98 aa).

The ABM domain occupies 2–91 (NVTLVEINIK…MSQPRQKRSF (90 aa)).

Belongs to the LsrG family. Homodimer.

Its subcellular location is the cytoplasm. It carries out the reaction (2S)-2-hydroxy-3,4-dioxopentyl phosphate = 3-hydroxy-2,4-dioxopentyl phosphate. Involved in the degradation of phospho-AI-2, thereby terminating induction of the lsr operon and closing the AI-2 signaling cycle. Catalyzes the conversion of (4S)-4-hydroxy-5-phosphonooxypentane-2,3-dione (P-DPD) to 3-hydroxy-5-phosphonooxypentane-2,4-dione (P-HPD). In Klebsiella pneumoniae subsp. pneumoniae (strain ATCC 700721 / MGH 78578), this protein is (4S)-4-hydroxy-5-phosphonooxypentane-2,3-dione isomerase.